We begin with the raw amino-acid sequence, 325 residues long: Electron transfer flavoprotein subunit alpha (325 aa).

Position 262–290 (leucine 262–aspartate 290) interacts with FAD.

Belongs to the ETF alpha-subunit/FixB family. In terms of assembly, heterodimer of an alpha and a beta subunit. FAD serves as cofactor.

Its function is as follows. The electron transfer flavoprotein serves as a specific electron acceptor for other dehydrogenases. It transfers the electrons to the main respiratory chain via ETF-ubiquinone oxidoreductase (ETF dehydrogenase). In Bacillus subtilis (strain 168), this protein is Electron transfer flavoprotein subunit alpha (etfA).